The sequence spans 223 residues: Octanoyltransferase (223 aa).

The 185-residue stretch at Asp30–Thr214 folds into the BPL/LPL catalytic domain. Substrate is bound by residues Arg75–His82, Ser144–Gly146, and Gly157–Ala159. Residue Cys175 is the Acyl-thioester intermediate of the active site.

It belongs to the LipB family.

It is found in the cytoplasm. The enzyme catalyses octanoyl-[ACP] + L-lysyl-[protein] = N(6)-octanoyl-L-lysyl-[protein] + holo-[ACP] + H(+). Its pathway is protein modification; protein lipoylation via endogenous pathway; protein N(6)-(lipoyl)lysine from octanoyl-[acyl-carrier-protein]: step 1/2. In terms of biological role, catalyzes the transfer of endogenously produced octanoic acid from octanoyl-acyl-carrier-protein onto the lipoyl domains of lipoate-dependent enzymes. Lipoyl-ACP can also act as a substrate although octanoyl-ACP is likely to be the physiological substrate. This Desulfotalea psychrophila (strain LSv54 / DSM 12343) protein is Octanoyltransferase.